Consider the following 314-residue polypeptide: NAD-dependent protein lipoamidase sirtuin-4, mitochondrial (314 aa).

Residues 1–28 (MKMSFALTFRSAKGRWIANPSQPCSKAS) constitute a mitochondrion transit peptide. One can recognise a Deacetylase sirtuin-type domain in the interval 37-314 (PPLDPEKVKE…GELLPLIDPC (278 aa)). NAD(+)-binding positions include 62–82 (GAGI…VGLY) and 143–146 (QNVD). The active-site Proton acceptor is the H161. Residues C169, C172, C220, and C223 each coordinate Zn(2+). Residues 260 to 262 (GSS), 286 to 288 (NIG), and C304 each bind NAD(+).

It belongs to the sirtuin family. Class II subfamily. As to quaternary structure, interacts with GLUD1, IDE and SLC25A5. Interacts with DLAT and PDHX. Interacts with MCCC1 (via the biotin carboxylation domain). Interacts with PCCA and PC. It depends on Zn(2+) as a cofactor. As to expression, detected in vascular smooth muscle and striated muscle. Detected in insulin-producing beta-cells in pancreas islets of Langerhans (at protein level). Widely expressed. Weakly expressed in leukocytes and fetal thymus.

Its subcellular location is the mitochondrion matrix. The enzyme catalyses N(6)-[(R)-lipoyl]-L-lysyl-[protein] + NAD(+) + H2O = 2''-O-lipoyl-ADP-D-ribose + nicotinamide + L-lysyl-[protein]. It catalyses the reaction N(6)-biotinyl-L-lysyl-[protein] + NAD(+) + H2O = 2''-O-biotinyl-ADP-D-ribose + nicotinamide + L-lysyl-[protein]. The catalysed reaction is N(6)-acetyl-L-lysyl-[protein] + NAD(+) + H2O = 2''-O-acetyl-ADP-D-ribose + nicotinamide + L-lysyl-[protein]. It carries out the reaction L-cysteinyl-[protein] + NAD(+) = S-(ADP-D-ribosyl)-L-cysteinyl-[protein] + nicotinamide + H(+). In terms of biological role, acts as a NAD-dependent protein lipoamidase, biotinylase, deacetylase and ADP-ribosyl transferase. Catalyzes more efficiently removal of lipoyl- and biotinyl- than acetyl-lysine modifications. Inhibits the pyruvate dehydrogenase complex (PDH) activity via the enzymatic hydrolysis of the lipoamide cofactor from the E2 component, DLAT, in a phosphorylation-independent manner. Catalyzes the transfer of ADP-ribosyl groups onto target proteins, including mitochondrial GLUD1, inhibiting GLUD1 enzyme activity. Acts as a negative regulator of mitochondrial glutamine metabolism by mediating mono ADP-ribosylation of GLUD1: expressed in response to DNA damage and negatively regulates anaplerosis by inhibiting GLUD1, leading to block metabolism of glutamine into tricarboxylic acid cycle and promoting cell cycle arrest. In response to mTORC1 signal, SIRT4 expression is repressed, promoting anaplerosis and cell proliferation. Acts as a tumor suppressor. Also acts as a NAD-dependent protein deacetylase: mediates deacetylation of 'Lys-471' of MLYCD, inhibiting its activity, thereby acting as a regulator of lipid homeostasis. Does not seem to deacetylate PC. Controls fatty acid oxidation by inhibiting PPARA transcriptional activation. Impairs SIRT1-PPARA interaction probably through the regulation of NAD(+) levels. Down-regulates insulin secretion. The protein is NAD-dependent protein lipoamidase sirtuin-4, mitochondrial of Homo sapiens (Human).